A 572-amino-acid polypeptide reads, in one-letter code: Urease subunit alpha (572 aa).

The 437-residue stretch at 136–572 (GGIDTHIHFI…VPLGQRYFLF (437 aa)) folds into the Urease domain. The Ni(2+) site is built by H141, H143, and K224. Residue K224 is modified to N6-carboxylysine. H226 provides a ligand contact to substrate. Ni(2+) contacts are provided by H253 and H279. H327 acts as the Proton donor in catalysis. D367 serves as a coordination point for Ni(2+).

The protein belongs to the metallo-dependent hydrolases superfamily. Urease alpha subunit family. In terms of assembly, heterotrimer of UreA (gamma), UreB (beta) and UreC (alpha) subunits. Three heterotrimers associate to form the active enzyme. It depends on Ni cation as a cofactor. Carboxylation allows a single lysine to coordinate two nickel ions.

It is found in the cytoplasm. The enzyme catalyses urea + 2 H2O + H(+) = hydrogencarbonate + 2 NH4(+). Its pathway is nitrogen metabolism; urea degradation; CO(2) and NH(3) from urea (urease route): step 1/1. This is Urease subunit alpha from Haemophilus influenzae (strain ATCC 51907 / DSM 11121 / KW20 / Rd).